Consider the following 275-residue polypeptide: MENRYSVHPEQAKRFTTAELREHFLIESLFVENKLNMFYSHEDRVVIGGAVPVKESIALDAGDFLKTDYFLERREIGIVNVGKPGAVKVGDEEYVLEHKDFLYIGLGNKDVFFSSLNEGGAKFYFISATAHQKYPVQKASLSELPYDHLGEEASSNVRNLYKVIHADGIQSCQLMMGITFLEPNNTWNTMPAHVHDRRMEVYLYLDLAEDAKVFHFMGEPTETRHLVVGNEQAVISPAWSVHSGSGTSNYCFIWAMAGENYTFKDMDAVPMNVIR.

H193, H195, E200, and H242 together coordinate Zn(2+).

This sequence belongs to the KduI family. Zn(2+) serves as cofactor.

The enzyme catalyses 5-dehydro-4-deoxy-D-glucuronate = 3-deoxy-D-glycero-2,5-hexodiulosonate. It participates in glycan metabolism; pectin degradation; 2-dehydro-3-deoxy-D-gluconate from pectin: step 4/5. Its function is as follows. Catalyzes the isomerization of 5-dehydro-4-deoxy-D-glucuronate to 3-deoxy-D-glycero-2,5-hexodiulosonate. This is 4-deoxy-L-threo-5-hexosulose-uronate ketol-isomerase from Bacillus licheniformis (strain ATCC 14580 / DSM 13 / JCM 2505 / CCUG 7422 / NBRC 12200 / NCIMB 9375 / NCTC 10341 / NRRL NRS-1264 / Gibson 46).